Here is a 216-residue protein sequence, read N- to C-terminus: uncharacterized protein (216 aa).

This is an uncharacterized protein from Escherichia coli (strain K12).